An 888-amino-acid chain; its full sequence is Mitogen-activated protein kinase kinase kinase 12 (888 aa).

A compositionally biased stretch (basic and acidic residues) spans 26-42 (MRKLDPDTSDCTPEKDL). Residues 26 to 104 (MRKLDPDTSD…TGSPESRASR (79 aa)) are disordered. Phosphothreonine is present on residues T37 and T43. Over residues 64–75 (SPSPGGEPPPEP) the composition is skewed to pro residues. Positions 158–399 (ILDLQWVGSG…FRQILLHLDI (242 aa)) constitute a Protein kinase domain. Residues 164 to 172 (VGSGAQGAV) and K185 contribute to the ATP site. The active-site Proton acceptor is D269. 2 leucine-zipper regions span residues 423–444 (VKLHFEKIKSEGTCLHRLEEEL) and 476–497 (LNALMLQLELKERELLRREQAL). The disordered stretch occupies residues 557 to 620 (GVGLPGCPKA…GGLGVGPTAW (64 aa)). Positions 572–584 (RSRRGKTRHRKAS) are enriched in basic residues. Positions 605–615 (GGLGSPGGLGV) are enriched in gly residues. S640 is modified (phosphoserine). Disordered stretches follow at residues 654 to 731 (RGRG…YQHL) and 743 to 888 (TRSQ…SLPP). A compositionally biased stretch (gly residues) spans 704-725 (PGEGVGLLGTGREGTTGRGGSR). Over residues 752–763 (SEEEEGEVDSEV) the composition is skewed to acidic residues. 2 stretches are compositionally biased toward polar residues: residues 776–789 (NMRQSLSTFSSENP) and 798–812 (SEPSPSGTPEVGSTN). Basic and acidic residues predominate over residues 813-823 (TDERPDERSDD).

Belongs to the protein kinase superfamily. STE Ser/Thr protein kinase family. MAP kinase kinase kinase subfamily. As to quaternary structure, homodimer. Interacts with MBIP. Requires Mg(2+) as cofactor. Post-translationally, autophosphorylated on Ser/Thr. Phosphorylated in cytosol under basal conditions and dephosphorylated when membrane-associated. In terms of processing, the activity of MAP3K12 can be regulated through its proteasomal degradation. APOE, through a receptor-mediated mechanism, activates MAP3K12 by preventing its proteasomal degradation.

The protein localises to the cytoplasm. The protein resides in the cell membrane. The enzyme catalyses L-seryl-[protein] + ATP = O-phospho-L-seryl-[protein] + ADP + H(+). The catalysed reaction is L-threonyl-[protein] + ATP = O-phospho-L-threonyl-[protein] + ADP + H(+). Part of a non-canonical MAPK signaling pathway. Activated by APOE, enhances the AP-1-mediated transcription of APP, via a MAP kinase signal transduction pathway composed of MAP2K7 and MAPK1/ERK2 and MAPK3/ERK1. May be an activator of the JNK/SAPK pathway. This chain is Mitogen-activated protein kinase kinase kinase 12 (Map3k12), found in Rattus norvegicus (Rat).